The following is a 224-amino-acid chain: Putative endoglucanase X (224 aa).

Residues Gln-147–Asp-168 form a disordered region. One can recognise a Dockerin domain in the interval Pro-162 to Asn-224.

It carries out the reaction Endohydrolysis of (1-&gt;4)-beta-D-glucosidic linkages in cellulose, lichenin and cereal beta-D-glucans.. Its function is as follows. This enzyme catalyzes the endohydrolysis of 1,4-beta-glucosidic linkages in cellulose, lichenin and cereal beta-D-glucans. In Acetivibrio thermocellus (Hungateiclostridium thermocellum), this protein is Putative endoglucanase X (celX).